Consider the following 480-residue polypeptide: Ribulose bisphosphate carboxylase large chain (480 aa).

The propeptide occupies 1 to 2 (MS). N-acetylproline is present on P3. Residue K14 is modified to N6,N6,N6-trimethyllysine. 2 residues coordinate substrate: N123 and T173. The active-site Proton acceptor is K175. Substrate is bound at residue K177. The Mg(2+) site is built by K201, D203, and E204. The residue at position 201 (K201) is an N6-carboxylysine. H294 acts as the Proton acceptor in catalysis. Residues R295, H327, and S379 each contribute to the substrate site.

It belongs to the RuBisCO large chain family. Type I subfamily. In terms of assembly, heterohexadecamer of 8 large chains and 8 small chains; disulfide-linked. The disulfide link is formed within the large subunit homodimers. Mg(2+) serves as cofactor. In terms of processing, the disulfide bond which can form in the large chain dimeric partners within the hexadecamer appears to be associated with oxidative stress and protein turnover.

It localises to the plastid. The protein resides in the chloroplast. The enzyme catalyses 2 (2R)-3-phosphoglycerate + 2 H(+) = D-ribulose 1,5-bisphosphate + CO2 + H2O. It catalyses the reaction D-ribulose 1,5-bisphosphate + O2 = 2-phosphoglycolate + (2R)-3-phosphoglycerate + 2 H(+). RuBisCO catalyzes two reactions: the carboxylation of D-ribulose 1,5-bisphosphate, the primary event in carbon dioxide fixation, as well as the oxidative fragmentation of the pentose substrate in the photorespiration process. Both reactions occur simultaneously and in competition at the same active site. The chain is Ribulose bisphosphate carboxylase large chain from Alluaudia procera (Madagascan ocotillo).